Reading from the N-terminus, the 205-residue chain is Proteasome subunit beta type-3 (205 aa).

Serine 31 bears the Phosphoserine mark. Lysine 70 participates in a covalent cross-link: Glycyl lysine isopeptide (Lys-Gly) (interchain with G-Cter in ubiquitin).

Belongs to the peptidase T1B family. In terms of assembly, the 26S proteasome consists of a 20S proteasome core and two 19S regulatory subunits. The 20S proteasome core is composed of 28 subunits that are arranged in four stacked rings, resulting in a barrel-shaped structure. The two end rings are each formed by seven alpha subunits, and the two central rings are each formed by seven beta subunits. The catalytic chamber with the active sites is on the inside of the barrel.

It is found in the cytoplasm. Its subcellular location is the nucleus. In terms of biological role, non-catalytic component of the proteasome which degrades poly-ubiquitinated proteins in the cytoplasm and in the nucleus. It is essential for the regulated turnover of proteins and for the removal of misfolded proteins. The proteasome is a multicatalytic proteinase complex that is characterized by its ability to cleave peptides with Arg, Phe, Tyr, Leu, and Glu adjacent to the leaving group at neutral or slightly basic pH. It has an ATP-dependent proteolytic activity. This subunit may participate in the trypsin-like activity of the enzyme complex. This is Proteasome subunit beta type-3 (PUP3) from Saccharomyces cerevisiae (strain ATCC 204508 / S288c) (Baker's yeast).